We begin with the raw amino-acid sequence, 307 residues long: tRNA dimethylallyltransferase (307 aa).

Residue 9–16 (GPTAVGKT) coordinates ATP. 11-16 (TAVGKT) lines the substrate pocket. An interaction with substrate tRNA region spans residues 34–37 (DSMQ).

It belongs to the IPP transferase family. In terms of assembly, monomer. It depends on Mg(2+) as a cofactor.

It catalyses the reaction adenosine(37) in tRNA + dimethylallyl diphosphate = N(6)-dimethylallyladenosine(37) in tRNA + diphosphate. Functionally, catalyzes the transfer of a dimethylallyl group onto the adenine at position 37 in tRNAs that read codons beginning with uridine, leading to the formation of N6-(dimethylallyl)adenosine (i(6)A). The polypeptide is tRNA dimethylallyltransferase (Limosilactobacillus reuteri (strain DSM 20016) (Lactobacillus reuteri)).